A 175-amino-acid polypeptide reads, in one-letter code: Co-chaperone protein HscB homolog (175 aa).

In terms of domain architecture, J spans 7-79 (SHFDLFHLPA…LKRATYLLSL (73 aa)).

Belongs to the HscB family. In terms of assembly, interacts with HscA and stimulates its ATPase activity.

In terms of biological role, co-chaperone involved in the maturation of iron-sulfur cluster-containing proteins. Seems to help targeting proteins to be folded toward HscA. The sequence is that of Co-chaperone protein HscB homolog from Burkholderia multivorans (strain ATCC 17616 / 249).